The primary structure comprises 447 residues: Alpha-1,6-mannosyl-glycoprotein 2-beta-N-acetylglucosaminyltransferase (447 aa).

At 1–9 (MRFRIYKRK) the chain is on the cytoplasmic side. The helical; Signal-anchor for type II membrane protein transmembrane segment at 10 to 29 (VLILTLVVAACGFVLWSSNG) threads the bilayer. Over 30–447 (RQRKNEALAP…ELCKSYRRLQ (418 aa)) the chain is Lumenal. N-linked (GlcNAc...) asparagine glycosylation is found at asparagine 69 and asparagine 86. Residues 123–127 (QVHNR) and aspartate 154 each bind substrate. A disulfide bridge connects residues cysteine 196 and cysteine 210. Residue 229-233 (QTKHH) participates in substrate binding. Aspartate 261 is a binding site for Mn(2+). A disulfide bridge links cysteine 283 with cysteine 286. Arginine 298 serves as a coordination point for substrate. Cystine bridges form between cysteine 334-cysteine 357, cysteine 339-cysteine 440, and cysteine 378-cysteine 386. Residue histidine 374 participates in Mn(2+) binding.

This sequence belongs to the glycosyltransferase 16 (GT16) protein family. In terms of assembly, homodimer. Mn(2+) is required as a cofactor.

The protein localises to the golgi apparatus membrane. The catalysed reaction is an N(4)-{beta-D-GlcNAc-(1-&gt;2)-alpha-D-Man-(1-&gt;3)-[alpha-D-Man-(1-&gt;6)]-beta-D-Man-(1-&gt;4)-beta-D-GlcNAc-(1-&gt;4)-beta-D-GlcNAc}-L-asparaginyl-[protein] + UDP-N-acetyl-alpha-D-glucosamine = N(4)-{beta-D-GlcNAc-(1-&gt;2)-alpha-D-Man-(1-&gt;3)-[beta-D-GlcNAc-(1-&gt;2)-alpha-D-Man-(1-&gt;6)]-beta-D-Man-(1-&gt;4)-beta-D-GlcNAc-(1-&gt;4)-beta-D-GlcNAc}-L-asparaginyl-[protein] + UDP + H(+). The protein operates within protein modification; protein glycosylation. Plays an essential role in protein N-glycosylation. Catalyzes the transfer of N-acetylglucosamine (GlcNAc) onto the free terminal mannose moiety in the core structure of the nascent N-linked glycan chain, giving rise to the second branch in complex glycans. This chain is Alpha-1,6-mannosyl-glycoprotein 2-beta-N-acetylglucosaminyltransferase (MGAT2), found in Homo sapiens (Human).